The sequence spans 264 residues: tRNA (guanine-N(1)-)-methyltransferase (264 aa).

S-adenosyl-L-methionine-binding positions include G125 and 145–150 (LGDFVL).

Belongs to the RNA methyltransferase TrmD family. As to quaternary structure, homodimer.

The protein localises to the cytoplasm. The catalysed reaction is guanosine(37) in tRNA + S-adenosyl-L-methionine = N(1)-methylguanosine(37) in tRNA + S-adenosyl-L-homocysteine + H(+). Functionally, specifically methylates guanosine-37 in various tRNAs. In Burkholderia ambifaria (strain MC40-6), this protein is tRNA (guanine-N(1)-)-methyltransferase.